The chain runs to 330 residues: Lactamase-like protein nscB (330 aa).

Zn(2+)-binding residues include H97, H99, D101, and H102. The Proton donor/acceptor role is filled by D101.

Belongs to the metallo-beta-lactamase superfamily. Requires Zn(2+) as cofactor.

Its pathway is secondary metabolite biosynthesis. In terms of biological role, lactamase-like protein; part of the gene cluster that mediates the biosynthesis of neosartoricin, a prenylated anthracenone that exhibits T-cell antiproliferative activity, suggestive of a physiological role as an immunosuppressive agent. The non-reducing polyketide synthase nscA probably synthesizes and cyclizes the decaketide backbone. The hydrolase nscB then mediates the product release through hydrolysis followed by spontaneous decarboxylation. The prenyltransferase nscD catalyzes the addition of the dimethylallyl group to the aromatic C5. The FAD-dependent monooxygenase nscC is then responsible for the stereospecific hydroxylation at C2. There is no gene encoding O-acetyltransferase in the nsc gene cluster; thus, the last step of 2-O-acetylation leading to neosartoricin may be catalyzed by an unidentified O-acetyltransferase. This chain is Lactamase-like protein nscB, found in Aspergillus fumigatus (strain ATCC MYA-4609 / CBS 101355 / FGSC A1100 / Af293) (Neosartorya fumigata).